The sequence spans 112 residues: uncharacterized protein (112 aa).

The region spanning 6-60 (LRQLRKAHKLTMEQLAEKIGIAKSSYGGYEAESKKPPLDKLVILARLYDVSVDYI) is the HTH cro/C1-type domain. The segment at residues 17 to 36 (MEQLAEKIGIAKSSYGGYEA) is a DNA-binding region (H-T-H motif).

This is an uncharacterized protein from Bacillus subtilis (strain 168).